Here is a 373-residue protein sequence, read N- to C-terminus: Dynein regulatory complex protein 9 (373 aa).

Residues 145-200 (EQAMKETIEREKNTTAAVRQLRNDLREEKLDHEEKMKEKKKGLSTLKEQLKALKMD) adopt a coiled-coil conformation. Residues 336–365 (RAQAAVIIQAWWRGHKVRMVMSGGGKKGAK) enclose the IQ domain.

Belongs to the DRC9 family. Component of the nexin-dynein regulatory complex (N-DRC).

Its subcellular location is the cytoplasm. It is found in the cytoskeleton. The protein resides in the flagellum axoneme. Component of the nexin-dynein regulatory complex (N-DRC), a key regulator of ciliary/flagellar motility which maintains the alignment and integrity of the distal axoneme and regulates microtubule sliding in motile axonemes. This is Dynein regulatory complex protein 9 from Chlamydomonas reinhardtii (Chlamydomonas smithii).